We begin with the raw amino-acid sequence, 496 residues long: Ammonium transporter 1 member 2 (496 aa).

11 helical membrane passes run 39–59 (LLFSAYLVFAMQLGFAMLCAG), 74–94 (VLDAAAGALFYYLFGFAFAFG), 120–140 (FFLFQWAFAIAAAGITSGSIA), 148–168 (YLIYSAFLTGFVYPVVSHWIW), 192–212 (FAGSGVVHMVGGVAGLWGALI), 236–256 (LVVLGSFLLWFGWYGFNPGSF), 274–296 (SAVGRTAVTTTLAGSTAALTTLF), 307–327 (VIDVCNGLLGGFAAITAGCSV), 331–351 (WAAIICGFVSAWVLIGLNALA), 360–380 (LEAAQLHGGCGAWGVIFTALF), and 412–432 (IVVILVIAAWVSFTMAPLFLV).

It belongs to the ammonia transporter channel (TC 1.A.11.2) family. As to expression, expressed in exodermis, sclerenchyma, endodermis and pericycle cells of primary root tips.

Its subcellular location is the membrane. Its function is as follows. Ammonium transporter probably involved in ammonium uptake from the soil and ammonium uptake and retrieval in the vascular system. The sequence is that of Ammonium transporter 1 member 2 (AMT1-2) from Oryza sativa subsp. japonica (Rice).